A 293-amino-acid chain; its full sequence is 33 kDa chaperonin (293 aa).

2 disulfide bridges follow: Cys-237–Cys-239 and Cys-271–Cys-274.

Belongs to the HSP33 family. Under oxidizing conditions two disulfide bonds are formed involving the reactive cysteines. Under reducing conditions zinc is bound to the reactive cysteines and the protein is inactive.

It is found in the cytoplasm. Functionally, redox regulated molecular chaperone. Protects both thermally unfolding and oxidatively damaged proteins from irreversible aggregation. Plays an important role in the bacterial defense system toward oxidative stress. This Haemophilus influenzae (strain PittGG) protein is 33 kDa chaperonin.